The primary structure comprises 922 residues: Pyruvate dehydrogenase E1 component (922 aa).

As to quaternary structure, homodimer. Part of an unusual ODH/PDH supercomplex, consisting of AceE (E1), AceF (E2), and Lpd (E3) together with OdhA (E1+E2). Mg(2+) serves as cofactor. Thiamine diphosphate is required as a cofactor.

It catalyses the reaction N(6)-[(R)-lipoyl]-L-lysyl-[protein] + pyruvate + H(+) = N(6)-[(R)-S(8)-acetyldihydrolipoyl]-L-lysyl-[protein] + CO2. Is a specific component of the pyruvate dehydrogenase (PDH) complex, that catalyzes the overall conversion of pyruvate to acetyl-CoA and CO(2). AceE has reductase activity with pyruvate but does not react with 2-oxoglutarate. The protein is Pyruvate dehydrogenase E1 component (aceE) of Corynebacterium glutamicum (strain ATCC 13032 / DSM 20300 / JCM 1318 / BCRC 11384 / CCUG 27702 / LMG 3730 / NBRC 12168 / NCIMB 10025 / NRRL B-2784 / 534).